The following is a 255-amino-acid chain: Small ribosomal subunit protein eS4 (255 aa).

Positions 44 to 107 (IPLLILVRDV…DEYYRMIPYP (64 aa)) constitute an S4 RNA-binding domain.

This sequence belongs to the eukaryotic ribosomal protein eS4 family.

The polypeptide is Small ribosomal subunit protein eS4 (Ignicoccus hospitalis (strain KIN4/I / DSM 18386 / JCM 14125)).